We begin with the raw amino-acid sequence, 382 residues long: MQDAAPRLTFTLRDEERLMMKIGVFVPIGNNGWLISTHAPQYMPTFELNKAIVQKAEHYHFDFALSMIKLRGFGGKTEFWDHNLESFTLMAGLAAVTSRIQIYATAATLTLPPAIVARMAATIDSISGGRFGVNLVTGWQKPEYEQMGIWPGDDYFSRRYDYLTEYVQVLRDLWGTGKSDFKGDFFTMNDCRVSPQPSVPMKVICAGQSDAGMAFSAQYADFNFCFGKGVNTPTAFAPTAVRMKQAAEQTGRDVGSYVLFMVIADETDDAARAKWEHYKAGADEEALSWLTEQSQKDTRSGTDTNVRQMADPTSAVNINMGTLVGSYASVARMLDEVASVPGAEGVLLTFDDFLSGIETFGERIQPLMQCRAHLPALTQEVA.

FMN-binding positions include 68–69 (IK), asparagine 134, glutamate 143, 159–160 (RY), and serine 209.

The protein belongs to the NtaA/SnaA/DszA monooxygenase family. RutA subfamily.

The catalysed reaction is uracil + FMNH2 + NADH + O2 = (Z)-3-ureidoacrylate + FMN + NAD(+) + H2O + H(+). The enzyme catalyses thymine + FMNH2 + NADH + O2 = (Z)-2-methylureidoacrylate + FMN + NAD(+) + H2O + H(+). Its function is as follows. Catalyzes the pyrimidine ring opening between N-3 and C-4 by an unusual flavin hydroperoxide-catalyzed mechanism, adding oxygen atoms in the process to yield ureidoacrylate peracid, that immediately reacts with FMN forming ureidoacrylate and FMN-N(5)-oxide. The FMN-N(5)-oxide reacts spontaneously with NADH to produce FMN. Requires the flavin reductase RutF to regenerate FMN in vivo. The sequence is that of Pyrimidine monooxygenase RutA from Escherichia coli O8 (strain IAI1).